The chain runs to 104 residues: Integration host factor subunit alpha (104 aa).

Belongs to the bacterial histone-like protein family. In terms of assembly, heterodimer of an alpha and a beta chain.

Its function is as follows. This protein is one of the two subunits of integration host factor, a specific DNA-binding protein that functions in genetic recombination as well as in transcriptional and translational control. This is Integration host factor subunit alpha from Bartonella quintana (strain Toulouse) (Rochalimaea quintana).